A 326-amino-acid polypeptide reads, in one-letter code: MATTERKPLLLDFEKPLAELATRIDQIRQLAEENGVDVSGQIRQLEARAMQLREEIFTSLSPSQRLQVARHPRRPSTLDYIQAISDEWMELHGDRCGGDDPALVGGIGRLSGQPVVMLGHQKGRDTKDNIARNFGMPYPGGYRKAMRLMEHANKFSMPILTFIDTPGAWSGVEAEHQGQGEAIAYNLREMFCLDVPIICTVIGEGGSGGALGIGVGDRLLMFEHSVYTVATPEACAAILWKDAGKAPQAAVALKIISHDLKRLGIIDQILPEPTGGAHSDPLKAATTLKQVLLENLDELNHLTAPERRQLRYEKFRKIGVFTEVAH.

The region spanning 45–298 (LEARAMQLRE…KQVLLENLDE (254 aa)) is the CoA carboxyltransferase C-terminal domain.

It belongs to the AccA family. In terms of assembly, acetyl-CoA carboxylase is a heterohexamer composed of biotin carboxyl carrier protein (AccB), biotin carboxylase (AccC) and two subunits each of ACCase subunit alpha (AccA) and ACCase subunit beta (AccD).

It is found in the cytoplasm. The enzyme catalyses N(6)-carboxybiotinyl-L-lysyl-[protein] + acetyl-CoA = N(6)-biotinyl-L-lysyl-[protein] + malonyl-CoA. It participates in lipid metabolism; malonyl-CoA biosynthesis; malonyl-CoA from acetyl-CoA: step 1/1. Its function is as follows. Component of the acetyl coenzyme A carboxylase (ACC) complex. First, biotin carboxylase catalyzes the carboxylation of biotin on its carrier protein (BCCP) and then the CO(2) group is transferred by the carboxyltransferase to acetyl-CoA to form malonyl-CoA. The polypeptide is Acetyl-coenzyme A carboxylase carboxyl transferase subunit alpha (Nostoc punctiforme (strain ATCC 29133 / PCC 73102)).